Reading from the N-terminus, the 421-residue chain is Zinc metalloproteinase-disintegrin-like lachestatin-2 (421 aa).

Residues 10–206 enclose the Peptidase M12B domain; that stretch reads KYVKLVLVAD…DMPQCILEKP (197 aa). 3 cysteine pairs are disulfide-bonded: Cys-121–Cys-201, Cys-161–Cys-185, and Cys-163–Cys-168. His-146 contributes to the Zn(2+) binding site. Glu-147 is a catalytic residue. Zn(2+)-binding residues include His-150 and His-156. In terms of domain architecture, Disintegrin spans 214-299; that stretch reads PPVCGNYFVE…AECTDRFQRN (86 aa). Ca(2+) is bound by residues Val-216, Asn-219, Phe-221, Glu-223, Glu-226, and Asp-229. Cystine bridges form between Cys-217–Cys-246, Cys-228–Cys-241, Cys-230–Cys-236, Cys-240–Cys-263, Cys-254–Cys-260, Cys-259–Cys-285, Cys-272–Cys-292, Cys-279–Cys-310, Cys-303–Cys-315, Cys-322–Cys-372, Cys-337–Cys-383, Cys-350–Cys-360, Cys-367–Cys-409, and Cys-403–Cys-414. The short motif at 278-280 is the D/ECD-tripeptide element; the sequence is ECD. Ca(2+) is bound by residues Asp-280, Met-281, Asp-283, Asp-294, and Arg-295. The N-linked (GlcNAc...) asparagine glycan is linked to Asn-312.

The protein belongs to the venom metalloproteinase (M12B) family. P-III subfamily. P-IIIc sub-subfamily. As to quaternary structure, homodimer; disulfide-linked. It depends on Zn(2+) as a cofactor. In terms of tissue distribution, expressed by the venom gland.

The protein localises to the secreted. Snake venom zinc metalloprotease that induces apoptosis in vascular endothelial cells (VEC), without degrading the extracellular matrix (it cannot cleave collagen) or inhibiting adhesion of VEC. Has also fibrinogenolytic and hemorrhagic activities. This is Zinc metalloproteinase-disintegrin-like lachestatin-2 from Lachesis muta rhombeata (Bushmaster).